The chain runs to 568 residues: Calcium-dependent protein kinase 5 (568 aa).

Positions 125–379 (EIDRYKLGKG…VEQVLKHRWF (255 aa)) constitute a Protein kinase domain. ATP is bound by residues 131–139 (LGKGSYGNV) and lysine 154. Aspartate 245 acts as the Proton acceptor in catalysis. Positions 400 to 408 (KFKEFHKLC) match the J domain autoinhibitory motif motif. Positions 400–435 (KFKEFHKLCKIKKLAVTCIAYQLNEKDIGKLKKTFE) are j domain. Residues 409 to 418 (KIKKLAVTCI) carry the J domain EF-hand interaction motif motif. EF-hand domains follow at residues 425 to 460 (KDIG…NDNE), 462 to 495 (DREL…HSIF), 496 to 531 (QQDV…SAVQ), and 534 to 568 (FSKE…GVKE). Residues aspartate 438, asparagine 440, aspartate 442, glutamate 449, aspartate 473, aspartate 475, asparagine 477, glutamate 484, aspartate 509, aspartate 511, aspartate 513, glutamate 520, aspartate 547, asparagine 549, aspartate 551, and glutamate 558 each coordinate Ca(2+).

This sequence belongs to the protein kinase superfamily. Ser/Thr protein kinase family. CDPK subfamily. It depends on Mg(2+) as a cofactor. Post-translationally, may be palmitoylated. In terms of processing, autophosphorylated in vitro.

It is found in the cytoplasm. The protein resides in the cytoplasmic vesicle. Its subcellular location is the secretory vesicle. It localises to the microneme membrane. The protein localises to the cell membrane. The enzyme catalyses L-seryl-[protein] + ATP = O-phospho-L-seryl-[protein] + ADP + H(+). It catalyses the reaction L-threonyl-[protein] + ATP = O-phospho-L-threonyl-[protein] + ADP + H(+). With respect to regulation, activated by calcium. Upon calcium binding to the EF-hand domains, the C-terminus of the junction domain (J domain) undergoes a conformational change which results in the dissociation of the pseudo-substrate inhibitory motif from the catalytic domain. This, in turn, may facilitate the autophosphorylation of the activation loop at Thr-285, which leads to the kinase activation. Calcium-dependent protein kinase which acts as a sensor and effector of intracellular Ca(2+) levels probably in part downstream of cGMP-activated PKG kinase. Plays a central role in host erythrocytes and hepatocytes infection cycles. During the liver stage, involved in sporozoite motility and thus in sporozoite invasion of host hepatocytes, probably together with CDPK1 and CDPK4. Involved in merosome egress from host hepatocytes, probably together with CDPK4. Required for the release of hepatic merozoites from merosomes in the host blood stream. During the asexual blood stage, required for merozoite egress from host erythrocytes by triggering microneme secretion. Phosphorylates transporter NPT1 at late schizont stage. The chain is Calcium-dependent protein kinase 5 from Plasmodium falciparum (isolate 3D7).